A 101-amino-acid chain; its full sequence is Small ribosomal subunit protein uS10 (101 aa).

Belongs to the universal ribosomal protein uS10 family. As to quaternary structure, part of the 30S ribosomal subunit.

Involved in the binding of tRNA to the ribosomes. The chain is Small ribosomal subunit protein uS10 from Mycobacteroides abscessus (strain ATCC 19977 / DSM 44196 / CCUG 20993 / CIP 104536 / JCM 13569 / NCTC 13031 / TMC 1543 / L948) (Mycobacterium abscessus).